We begin with the raw amino-acid sequence, 377 residues long: Nitric oxide reductase FlRd-NAD(+) reductase (377 aa).

This sequence belongs to the FAD-dependent oxidoreductase family. Requires FAD as cofactor.

It localises to the cytoplasm. It catalyses the reaction 2 reduced [nitric oxide reductase rubredoxin domain] + NAD(+) + H(+) = 2 oxidized [nitric oxide reductase rubredoxin domain] + NADH. It functions in the pathway nitrogen metabolism; nitric oxide reduction. One of at least two accessory proteins for anaerobic nitric oxide (NO) reductase. Reduces the rubredoxin moiety of NO reductase. The chain is Nitric oxide reductase FlRd-NAD(+) reductase from Escherichia coli O81 (strain ED1a).